Reading from the N-terminus, the 551-residue chain is Formate--tetrahydrofolate ligase (551 aa).

54-61 (TPPGEGKT) is a binding site for ATP.

This sequence belongs to the formate--tetrahydrofolate ligase family.

The enzyme catalyses (6S)-5,6,7,8-tetrahydrofolate + formate + ATP = (6R)-10-formyltetrahydrofolate + ADP + phosphate. Its pathway is one-carbon metabolism; tetrahydrofolate interconversion. This Myxococcus xanthus (strain DK1622) protein is Formate--tetrahydrofolate ligase.